We begin with the raw amino-acid sequence, 861 residues long: MIGQITSGLFGGHDDSKKVKGTVVMMNKNVLDFTDLASSLTGKIFDVLGQKVSFQLISSVQGDPTNGLQGKHSNPAYLENSLFTLTPLTAGSETAFGVTFDWNEEFGVPGAFIIKNMHITEFFLKSLTLEDVPNHGKVHFVCNSWVYPSLNYKSDRIFFANQPYLPSETPELLRKYRENELLTLRGDGTGKREAWDRIYDYDIYNDLGNPDQGKENVRTTLGGSAEYPYPRRGRTGRPPTRTDPKVKSRIPLILSLDIYVPRDERFGHLKMSDFLTYALKSIVQFILPELHALFDGTPNEFDSFEDVLRLYEGGIKLPQGPLFKALTAAIPLEMIRELLRTDGEGILRFPTPLVIKDSKTAWRTDEEFAREMLAGVNPIIISRLQEFPPKSKLDPEAYGNQNSTITAEHIEDKLDGLTVDEAMNNNKLFILNHHDVIIPYLRRINTTITKTYASRTLLFLQDNGSLKPLAIELSLPHPDGDQFGVTSKVYTPTDQGVESSIWQLAKAYVAVNDTGVHQLISHWLNTHAVIEPFVIATNRQLSVLHPIHKLLYPHFRDTMNINASARQILVNAGGVLESTVFQSKFAMEMSAVVYKDWVFPDQALPADLVKRGVAVEDSSSPHGVRLLIEDYPYAVDGLEIWSAIKSWVTDYCSFYYGSDEEILKDNELQAWWKELREVGHGDKKNEPWWPEMKTPQELIDSCTTIIWIASALHAAVNFGQYPYAGYLPNRPTVSRRFMPEPGTPEYEELKRNPDKAFLKTITAQLQTLLGVSLVEILSRHTTDEIYLGQRESPEWTKDKEPLAAFDRFGKKLTDIEKQIIQRNGDNILTNRSGPVNAPYTLLFPTSEGGLTGKGIPNSVSI.

The PLAT domain maps to 33 to 160 (FTDLASSLTG…NYKSDRIFFA (128 aa)). One can recognise a Lipoxygenase domain in the interval 163–861 (PYLPSETPEL…GKGIPNSVSI (699 aa)). The tract at residues 220 to 245 (TLGGSAEYPYPRRGRTGRPPTRTDPK) is disordered. The Fe cation site is built by H522, H527, H713, N717, and I861.

It belongs to the lipoxygenase family. As to quaternary structure, monomer. It depends on Fe cation as a cofactor.

The protein localises to the cytoplasm. The enzyme catalyses (9Z,12Z)-octadecadienoate + O2 = (9S)-hydroperoxy-(10E,12Z)-octadecadienoate. The protein operates within lipid metabolism; oxylipin biosynthesis. Plant lipoxygenases may be involved in a number of diverse aspects of plant physiology including growth and development, pest resistance, and senescence or responses to wounding. Catalyzes the hydroperoxidation of lipids containing a cis,cis-1,4-pentadiene structure. The polypeptide is Probable linoleate 9S-lipoxygenase 8 (LOX1.8) (Solanum tuberosum (Potato)).